The chain runs to 346 residues: Phosphoribosylformylglycinamidine cyclo-ligase (346 aa).

Belongs to the AIR synthase family.

It is found in the cytoplasm. The enzyme catalyses 2-formamido-N(1)-(5-O-phospho-beta-D-ribosyl)acetamidine + ATP = 5-amino-1-(5-phospho-beta-D-ribosyl)imidazole + ADP + phosphate + H(+). It participates in purine metabolism; IMP biosynthesis via de novo pathway; 5-amino-1-(5-phospho-D-ribosyl)imidazole from N(2)-formyl-N(1)-(5-phospho-D-ribosyl)glycinamide: step 2/2. In Vibrio parahaemolyticus serotype O3:K6 (strain RIMD 2210633), this protein is Phosphoribosylformylglycinamidine cyclo-ligase.